The following is a 29-amino-acid chain: Cytochrome b6-f complex subunit 8 (29 aa).

The chain crosses the membrane as a helical span at residues 3–23 (IVSIAWAALMVVFTFSLSLVV).

The protein belongs to the PetN family. The 4 large subunits of the cytochrome b6-f complex are cytochrome b6, subunit IV (17 kDa polypeptide, PetD), cytochrome f and the Rieske protein, while the 4 small subunits are PetG, PetL, PetM and PetN. The complex functions as a dimer.

The protein resides in the plastid. The protein localises to the chloroplast thylakoid membrane. In terms of biological role, component of the cytochrome b6-f complex, which mediates electron transfer between photosystem II (PSII) and photosystem I (PSI), cyclic electron flow around PSI, and state transitions. In Angiopteris evecta (Mule's foot fern), this protein is Cytochrome b6-f complex subunit 8.